The sequence spans 457 residues: Guanine nucleotide-binding protein subunit alpha homolog (457 aa).

In terms of domain architecture, G-alpha spans 131 to 457 (RQVKLLLLGA…QRNLNALMLQ (327 aa)). A G1 motif region spans residues 134-147 (KLLLLGAGESGKST). GTP-binding positions include 139 to 146 (GAGESGKS), 274 to 280 (LHCRKAT), 299 to 303 (DVGGQ), 369 to 372 (NKTD), and Ala429. Residues Ser146 and Thr280 each contribute to the Mg(2+) site. Residues 272–280 (DILHCRKAT) form a G2 motif region. The tract at residues 295-304 (FVFVDVGGQR) is G3 motif. A G4 motif region spans residues 365-372 (ILFLNKTD). A G5 motif region spans residues 427–432 (TTAIDT).

It belongs to the G-alpha family. G(12) subfamily. In terms of assembly, g proteins are composed of 3 units; alpha, beta and gamma. The alpha chain contains the guanine nucleotide binding site. In terms of tissue distribution, in ovary, expressed in nurse cells and oocyte. In early embryos, distributed uniformly. At the extended germband stage, accumulates in the mesoderm.

It is found in the cytoplasm. Its function is as follows. May play a role in a signal transduction pathway used during gastrulation. Required specifically for the ventral furrow and posterior midgut invaginations, where it is necessary for coordinating cell shape changes. Functionally, guanine nucleotide-binding proteins (G proteins) are involved as modulators or transducers in various transmembrane signaling systems. The sequence is that of Guanine nucleotide-binding protein subunit alpha homolog (cta) from Drosophila melanogaster (Fruit fly).